Reading from the N-terminus, the 493-residue chain is Cytochrome P450 monooxygenase esdpG (493 aa).

The helical transmembrane segment at 10 to 30 (VLGVTWLSALFTLGSLSVFWL) threads the bilayer. Heme is bound at residue Cys434.

Belongs to the cytochrome P450 family. Heme is required as a cofactor.

It localises to the membrane. It functions in the pathway secondary metabolite biosynthesis; terpenoid biosynthesis. Cytochrome P450 monooxygenasee; part of the cluster that mediates the biosynthesis of shearones, diterpenoid pyrones (DPs) which are structurally diverse meroterpenoids consisting of a diterpene linked by a pyrone, and which may exhibit a range of bioactivities. Whitin the pathway, esdpG takes part in the molecular scaffold modification via the hydroxylation at C-11 and C-12 and can transform shearone A into shearone C and shearone B into shearone D. The molecular scaffold is commonly biosynthesized by a series of enzymes including the non-reducing polyketide synthase (NR-PKS) esdpA that generates an alpha-pyrone; the prenyltransferase esdpC that attaches a geranylgeranyl pyrophosphate (GGPP) produced by the GGPP synthase (GGPPS) esdpD onto the pyrone unit; the FAD-dependent monooxygenase esdpE that converts an olefin on the diterpene unit into an epoxide; and the terpene cyclase esdpB that catalyzes the cyclization reactions to give the molecular backbone shearone A. In the modification steps, esdpF oxidizes the hydroxy group to a ketone at C-3 and esdpG then attaches hydroxy groups at both C-11 and C-12. After that, esdpI hydroxylates at C-20 and esdpH hydroxylates at C-6'. The ether bridge is generated by nucleophilic attack of the hydroxy group at C-20 to the carbonyl carbon at C-3. EsdpH can also functions prior to esdpI. The different combinations of these modification enzymes lead to the production of diverse shearone derivatives, shearone I being the end product of the pathway. The alpha-ketoglutarate-dependent dioxygenase esdpJ seems not to be involved in this pathway. The polypeptide is Cytochrome P450 monooxygenase esdpG (Penicillium shearii (Eupenicillium shearii)).